The following is a 201-amino-acid chain: Holliday junction branch migration complex subunit RuvA (201 aa).

Residues 1-63 (MIAYLSGVVR…EDAQLLFGFP (63 aa)) form a domain I region. Positions 64-142 (DADHLKLFDL…EHLAAAASGA (79 aa)) are domain II. The tract at residues 143–150 (AGGKRPAR) is flexible linker. The tract at residues 151–201 (VSSTAGHDAVDALLALGFREAQVRAAVAELLGADPEASADTLIRKALGRLR) is domain III.

It belongs to the RuvA family. In terms of assembly, homotetramer. Forms an RuvA(8)-RuvB(12)-Holliday junction (HJ) complex. HJ DNA is sandwiched between 2 RuvA tetramers; dsDNA enters through RuvA and exits via RuvB. An RuvB hexamer assembles on each DNA strand where it exits the tetramer. Each RuvB hexamer is contacted by two RuvA subunits (via domain III) on 2 adjacent RuvB subunits; this complex drives branch migration. In the full resolvosome a probable DNA-RuvA(4)-RuvB(12)-RuvC(2) complex forms which resolves the HJ.

The protein resides in the cytoplasm. Its function is as follows. The RuvA-RuvB-RuvC complex processes Holliday junction (HJ) DNA during genetic recombination and DNA repair, while the RuvA-RuvB complex plays an important role in the rescue of blocked DNA replication forks via replication fork reversal (RFR). RuvA specifically binds to HJ cruciform DNA, conferring on it an open structure. The RuvB hexamer acts as an ATP-dependent pump, pulling dsDNA into and through the RuvAB complex. HJ branch migration allows RuvC to scan DNA until it finds its consensus sequence, where it cleaves and resolves the cruciform DNA. The chain is Holliday junction branch migration complex subunit RuvA from Deinococcus radiodurans (strain ATCC 13939 / DSM 20539 / JCM 16871 / CCUG 27074 / LMG 4051 / NBRC 15346 / NCIMB 9279 / VKM B-1422 / R1).